A 184-amino-acid chain; its full sequence is Adenine phosphoribosyltransferase (184 aa).

This sequence belongs to the purine/pyrimidine phosphoribosyltransferase family. As to quaternary structure, homodimer.

The protein localises to the cytoplasm. It carries out the reaction AMP + diphosphate = 5-phospho-alpha-D-ribose 1-diphosphate + adenine. It participates in purine metabolism; AMP biosynthesis via salvage pathway; AMP from adenine: step 1/1. Functionally, catalyzes a salvage reaction resulting in the formation of AMP, that is energically less costly than de novo synthesis. The chain is Adenine phosphoribosyltransferase from Mycobacterium marinum (strain ATCC BAA-535 / M).